Consider the following 211-residue polypeptide: Large ribosomal subunit protein uL3 (211 aa).

This sequence belongs to the universal ribosomal protein uL3 family. As to quaternary structure, part of the 50S ribosomal subunit. Forms a cluster with proteins L14 and L19.

Its function is as follows. One of the primary rRNA binding proteins, it binds directly near the 3'-end of the 23S rRNA, where it nucleates assembly of the 50S subunit. This is Large ribosomal subunit protein uL3 from Akkermansia muciniphila (strain ATCC BAA-835 / DSM 22959 / JCM 33894 / BCRC 81048 / CCUG 64013 / CIP 107961 / Muc).